Here is a 465-residue protein sequence, read N- to C-terminus: Ribulose bisphosphate carboxylase large chain (465 aa).

Position 4 is an N6,N6,N6-trimethyllysine (lysine 4). Positions 113 and 163 each coordinate substrate. The active-site Proton acceptor is the lysine 165. Lysine 167 is a binding site for substrate. The Mg(2+) site is built by lysine 191, aspartate 193, and glutamate 194. Position 191 is an N6-carboxylysine (lysine 191). Catalysis depends on histidine 284, which acts as the Proton acceptor. Positions 285, 317, and 369 each coordinate substrate.

Belongs to the RuBisCO large chain family. Type I subfamily. As to quaternary structure, heterohexadecamer of 8 large chains and 8 small chains; disulfide-linked. The disulfide link is formed within the large subunit homodimers. The cofactor is Mg(2+). The disulfide bond which can form in the large chain dimeric partners within the hexadecamer appears to be associated with oxidative stress and protein turnover.

The protein localises to the plastid. The protein resides in the chloroplast. It carries out the reaction 2 (2R)-3-phosphoglycerate + 2 H(+) = D-ribulose 1,5-bisphosphate + CO2 + H2O. The catalysed reaction is D-ribulose 1,5-bisphosphate + O2 = 2-phosphoglycolate + (2R)-3-phosphoglycerate + 2 H(+). RuBisCO catalyzes two reactions: the carboxylation of D-ribulose 1,5-bisphosphate, the primary event in carbon dioxide fixation, as well as the oxidative fragmentation of the pentose substrate in the photorespiration process. Both reactions occur simultaneously and in competition at the same active site. This is Ribulose bisphosphate carboxylase large chain from Humiria balsamifera (Tauroniro).